Here is a 309-residue protein sequence, read N- to C-terminus: Syndecan-1 (309 aa).

The first 22 residues, Met-1–Pro-22, serve as a signal peptide directing secretion. Over Gln-23–Gly-253 the chain is Extracellular. Disordered stretches follow at residues Asn-28–Leu-57 and Thr-145–Ser-185. The segment covering Glu-32–Asp-42 has biased composition (acidic residues). An O-linked (Xyl...) (chondroitin sulfate) serine glycan is attached at Ser-37. Residue Asn-43 is glycosylated (N-linked (GlcNAc...) asparagine). O-linked (Xyl...) (heparan sulfate) serine glycans are attached at residues Ser-45 and Ser-47. Over residues Gly-173–Gly-183 the composition is skewed to low complexity. Ser-205 and Ser-215 each carry an O-linked (Xyl...) (chondroitin sulfate) serine glycan. A helical membrane pass occupies residues Gly-254–Leu-274. At Tyr-275–Ala-309 the chain is on the cytoplasmic side. The segment at Gly-283–Ala-309 is disordered. Ser-284 is modified (phosphoserine).

This sequence belongs to the syndecan proteoglycan family. In terms of assembly, interacts with CDCP1. Interacts (via C-terminus) with TIAM1 (via PDZ domain). Interacts with MDK. Post-translationally, shedding is enhanced by a number of factors such as heparanase, thrombin or EGF. Also by stress and wound healing. PMA-mediated shedding is inhibited by TIMP3.

It localises to the membrane. The protein resides in the secreted. The protein localises to the extracellular exosome. Functionally, cell surface proteoglycan that contains both heparan sulfate and chondroitin sulfate and that links the cytoskeleton to the interstitial matrix. Regulates exosome biogenesis in concert with SDCBP and PDCD6IP. Able to induce its own expression in dental mesenchymal cells and also in the neighboring dental epithelial cells via an MSX1-mediated pathway. This is Syndecan-1 from Mesocricetus auratus (Golden hamster).